The primary structure comprises 263 residues: Small ribosomal subunit protein eS4 (263 aa).

Positions 42–104 constitute an S4 RNA-binding domain; it reads LPLIVFLRNR…TGEHFRLVYD (63 aa).

Belongs to the eukaryotic ribosomal protein eS4 family.

In Pan paniscus (Pygmy chimpanzee), this protein is Small ribosomal subunit protein eS4 (RPS4Y1).